The following is a 258-amino-acid chain: MLSRRIIPCLDVRDGRVVKGVKFRDHIDMGDIVELALRYRAQGADELVFYDIGASPEGRSVDYTWVERVARLIDIPFCVAGGIGDVETARAVLHAGADKISINSPALGRPQLISELADAFGVQCVVVGIDSIREEDGQWRVRRYTGDPSKTQALPMRTLDWVAEAQRLGAGEMVLNCMDNDGVRRGYDIAQLRQVRALCRVPLIASGGAGDMQHFADVFDQADVDGALAASVFHSGAIPIPELKQFLRAQQIEVRDGQ.

Catalysis depends on residues D11 and D130.

The protein belongs to the HisA/HisF family. Heterodimer of HisH and HisF.

The protein resides in the cytoplasm. The enzyme catalyses 5-[(5-phospho-1-deoxy-D-ribulos-1-ylimino)methylamino]-1-(5-phospho-beta-D-ribosyl)imidazole-4-carboxamide + L-glutamine = D-erythro-1-(imidazol-4-yl)glycerol 3-phosphate + 5-amino-1-(5-phospho-beta-D-ribosyl)imidazole-4-carboxamide + L-glutamate + H(+). Its pathway is amino-acid biosynthesis; L-histidine biosynthesis; L-histidine from 5-phospho-alpha-D-ribose 1-diphosphate: step 5/9. Its function is as follows. IGPS catalyzes the conversion of PRFAR and glutamine to IGP, AICAR and glutamate. The HisF subunit catalyzes the cyclization activity that produces IGP and AICAR from PRFAR using the ammonia provided by the HisH subunit. The polypeptide is Imidazole glycerol phosphate synthase subunit HisF (Xanthomonas axonopodis pv. citri (strain 306)).